The chain runs to 274 residues: Tropomyosin (274 aa).

Basic and acidic residues predominate over residues 1–35; it reads MKLEKDNAMDRADTLEQQNKEANNRAEKSEEEVHN. The segment at 1 to 45 is disordered; it reads MKLEKDNAMDRADTLEQQNKEANNRAEKSEEEVHNLQKRMQQLEN. Residues 1 to 274 adopt a coiled-coil conformation; that stretch reads MKLEKDNAMD…DQTFSELSGY (274 aa).

Belongs to the tropomyosin family. Homodimer.

Functionally, tropomyosin, in association with the troponin complex, plays a central role in the calcium dependent regulation of muscle contraction. The polypeptide is Tropomyosin (Metapenaeus ensis (Greasyback shrimp)).